Reading from the N-terminus, the 241-residue chain is Phosphoribosylaminoimidazole-succinocarboxamide synthase (241 aa).

It belongs to the SAICAR synthetase family.

The enzyme catalyses 5-amino-1-(5-phospho-D-ribosyl)imidazole-4-carboxylate + L-aspartate + ATP = (2S)-2-[5-amino-1-(5-phospho-beta-D-ribosyl)imidazole-4-carboxamido]succinate + ADP + phosphate + 2 H(+). It participates in purine metabolism; IMP biosynthesis via de novo pathway; 5-amino-1-(5-phospho-D-ribosyl)imidazole-4-carboxamide from 5-amino-1-(5-phospho-D-ribosyl)imidazole-4-carboxylate: step 1/2. This chain is Phosphoribosylaminoimidazole-succinocarboxamide synthase, found in Lacticaseibacillus paracasei (strain ATCC 334 / BCRC 17002 / CCUG 31169 / CIP 107868 / KCTC 3260 / NRRL B-441) (Lactobacillus paracasei).